A 479-amino-acid polypeptide reads, in one-letter code: MSQGEIVQVIGPVVDVKFSIGKDLPDINNALKVIKSDDDSIILEVILEQGDGVLRCIAMESTDGLRRGMKVEDTGSSISVPVGPDTLGRVFNVLGQPIDGGPEFPADHPRSGIHKEAPKYDELTTSREILETGIKVIDLLEPYLRGGKVGLFGGAGVGKTTIIQELIHNIAQEHNGISVFTGVGERTREGNDLYFEMKASGVLDKTAMVFGQMNEPPGARMRVALTGLTIAEYFRDVEGQDVLLFIDNIFRFTQAGSEVSALLGRIPSAVGYQPTLATEMGQLQERITSTKKGSITSIQAVYVPADDYTDPAPATTFAYLDATTNLERSLVEQGIYPAVDPLESTSSALDPEIVGQEHYDVATRVQHILQRYRELQDIISVLGMDELSDEEKLIVARARRIQFFLSQNFFVAEVFTSVPGSYVPIKETIKGFKMILDGHLDDLPEDAFRGVGPIEDVLKKALKMGVTPSDPEAKALLEK.

153–160 (GGAGVGKT) contributes to the ATP binding site.

The protein belongs to the ATPase alpha/beta chains family. As to quaternary structure, F-type ATPases have 2 components, CF(1) - the catalytic core - and CF(0) - the membrane proton channel. CF(1) has five subunits: alpha(3), beta(3), gamma(1), delta(1), epsilon(1). CF(0) has three main subunits: a(1), b(2) and c(9-12). The alpha and beta chains form an alternating ring which encloses part of the gamma chain. CF(1) is attached to CF(0) by a central stalk formed by the gamma and epsilon chains, while a peripheral stalk is formed by the delta and b chains.

Its subcellular location is the cell membrane. The enzyme catalyses ATP + H2O + 4 H(+)(in) = ADP + phosphate + 5 H(+)(out). Its function is as follows. Produces ATP from ADP in the presence of a proton gradient across the membrane. The catalytic sites are hosted primarily by the beta subunits. The polypeptide is ATP synthase subunit beta (Lactobacillus delbrueckii subsp. bulgaricus (strain ATCC BAA-365 / Lb-18)).